A 78-amino-acid polypeptide reads, in one-letter code: Small ribosomal subunit protein bS18 (78 aa).

Belongs to the bacterial ribosomal protein bS18 family. In terms of assembly, part of the 30S ribosomal subunit. Forms a tight heterodimer with protein bS6.

Binds as a heterodimer with protein bS6 to the central domain of the 16S rRNA, where it helps stabilize the platform of the 30S subunit. The protein is Small ribosomal subunit protein bS18 of Nocardioides sp. (strain ATCC BAA-499 / JS614).